A 379-amino-acid chain; its full sequence is Programmed cell death protein 2-like (379 aa).

The protein is Programmed cell death protein 2-like (PDCD2L) of Gallus gallus (Chicken).